The chain runs to 631 residues: Nucleoside triphosphatase I (631 aa).

The Helicase ATP-binding domain maps to 42–204 (FLGLDSMHSL…TMLVNLLRPG (163 aa)). 55-62 (HETGVGKT) is a binding site for ATP. A DEXH box motif is present at residues 141–144 (DECH). The Helicase C-terminal domain maps to 367–532 (KFIDVCLGIL…EFVQLFRVFK (166 aa)).

The protein belongs to the helicase family. NPH I subfamily. In terms of assembly, monomer.

It carries out the reaction a ribonucleoside 5'-triphosphate + H2O = a ribonucleoside 5'-diphosphate + phosphate + H(+). Its function is as follows. Serves two roles in transcription; it acts in concert with viral termination factor/capping enzyme to catalyze release of UUUUUNU-containing nascent RNA from the elongation complex, and it acts by itself as a polymerase elongation factor to facilitate readthrough of intrinsic pause sites. This Homo sapiens (Human) protein is Nucleoside triphosphatase I (NPH1).